Consider the following 321-residue polypeptide: N-acetyl-gamma-glutamyl-phosphate reductase (321 aa).

Cys131 is an active-site residue.

Belongs to the NAGSA dehydrogenase family. Type 1 subfamily.

It is found in the cytoplasm. The catalysed reaction is N-acetyl-L-glutamate 5-semialdehyde + phosphate + NADP(+) = N-acetyl-L-glutamyl 5-phosphate + NADPH + H(+). It participates in amino-acid biosynthesis; L-arginine biosynthesis; N(2)-acetyl-L-ornithine from L-glutamate: step 3/4. Catalyzes the NADPH-dependent reduction of N-acetyl-5-glutamyl phosphate to yield N-acetyl-L-glutamate 5-semialdehyde. This is N-acetyl-gamma-glutamyl-phosphate reductase from Christiangramia forsetii (strain DSM 17595 / CGMCC 1.15422 / KT0803) (Gramella forsetii).